The following is a 91-amino-acid chain: Putative regulatory protein Tlet_1629 (91 aa).

The protein belongs to the RemA family.

The sequence is that of Putative regulatory protein Tlet_1629 from Pseudothermotoga lettingae (strain ATCC BAA-301 / DSM 14385 / NBRC 107922 / TMO) (Thermotoga lettingae).